Here is a 198-residue protein sequence, read N- to C-terminus: MILYRIGEIIHKHNSNIIFESQGIGYSLILPDPERVEIKQKCKLYLFEIKNEYQYATYAFKDFKERLLFVDLISLNGIGPRAAFNILNFGFEKVVALIAEGNAEALIEIPYLNPRMARLIVAELQAKWSKMISPKDAAKINETTNTLSEVKETLKMVGFKTKQIDGALSKISSTDDVEKMIEEAIKLMSTQNYESATA.

Positions 1-61 (MILYRIGEII…EYQYATYAFK (61 aa)) are domain I. The domain II stretch occupies residues 62-139 (DFKERLLFVD…KMISPKDAAK (78 aa)). Residues 140 to 144 (INETT) form a flexible linker region. Positions 144–198 (TNTLSEVKETLKMVGFKTKQIDGALSKISSTDDVEKMIEEAIKLMSTQNYESATA) are domain III.

It belongs to the RuvA family. Homotetramer. Forms an RuvA(8)-RuvB(12)-Holliday junction (HJ) complex. HJ DNA is sandwiched between 2 RuvA tetramers; dsDNA enters through RuvA and exits via RuvB. An RuvB hexamer assembles on each DNA strand where it exits the tetramer. Each RuvB hexamer is contacted by two RuvA subunits (via domain III) on 2 adjacent RuvB subunits; this complex drives branch migration. In the full resolvosome a probable DNA-RuvA(4)-RuvB(12)-RuvC(2) complex forms which resolves the HJ.

The protein resides in the cytoplasm. The RuvA-RuvB-RuvC complex processes Holliday junction (HJ) DNA during genetic recombination and DNA repair, while the RuvA-RuvB complex plays an important role in the rescue of blocked DNA replication forks via replication fork reversal (RFR). RuvA specifically binds to HJ cruciform DNA, conferring on it an open structure. The RuvB hexamer acts as an ATP-dependent pump, pulling dsDNA into and through the RuvAB complex. HJ branch migration allows RuvC to scan DNA until it finds its consensus sequence, where it cleaves and resolves the cruciform DNA. This is Holliday junction branch migration complex subunit RuvA from Mycoplasmopsis agalactiae (strain NCTC 10123 / CIP 59.7 / PG2) (Mycoplasma agalactiae).